An 811-amino-acid chain; its full sequence is RFX-like DNA-binding protein RFX1 (811 aa).

Disordered stretches follow at residues 48 to 92 and 111 to 156; these read EPTS…TYLP and LLHQ…QRQP. The span at 51 to 70 shows a compositional bias: low complexity; it reads SRGSNDNSNGPSNGSSVNSN. The segment covering 140-149 has biased composition (pro residues); the sequence is SPTPTQPPAQ. S173 carries the post-translational modification Phosphoserine. The disordered stretch occupies residues 181-222; it reads KSEETLNNNPPTAAKRTNTFPSIPSSTKKQKTSQEKRISSIS. A compositionally biased stretch (polar residues) spans 185-204; that stretch reads TLNNNPPTAAKRTNTFPSIP. Positions 285–360 form a DNA-binding region, RFX-type winged-helix; it reads ALLWLMKNCK…YHYCGLKLTV (76 aa). The span at 377 to 391 shows a compositional bias: low complexity; it reads LVHNNDPISPLSSPS. The interval 377–461 is disordered; the sequence is LVHNNDPISP…AANNPTGTLS (85 aa). The segment covering 409 to 428 has biased composition (polar residues); it reads NRKSLSRTGSPVKQSSNDNP. Basic and acidic residues predominate over residues 434–445; it reads ESQHPNETEANK.

This sequence belongs to the RFX family.

The protein is RFX-like DNA-binding protein RFX1 (RFX1) of Saccharomyces cerevisiae (strain ATCC 204508 / S288c) (Baker's yeast).